The following is a 537-amino-acid chain: O-phosphoserine--tRNA(Cys) ligase (537 aa).

Residues 186–188, 231–233, 273–274, and Asn-317 contribute to the substrate site; these read HMT, SAS, and YY.

The protein belongs to the class-II aminoacyl-tRNA synthetase family. O-phosphoseryl-tRNA(Cys) synthetase subfamily. As to quaternary structure, homotetramer. Interacts with SepCysS.

It carries out the reaction tRNA(Cys) + O-phospho-L-serine + ATP = O-phospho-L-seryl-tRNA(Cys) + AMP + diphosphate. Catalyzes the attachment of O-phosphoserine (Sep) to tRNA(Cys). In Methanococcus maripaludis (strain C7 / ATCC BAA-1331), this protein is O-phosphoserine--tRNA(Cys) ligase.